The primary structure comprises 212 residues: Dephospho-CoA kinase (212 aa).

Positions 4-204 (IVALTGGICS…RDYLKAEKTT (201 aa)) constitute a DPCK domain. Residue 12–17 (CSGKSV) coordinates ATP.

The protein belongs to the CoaE family.

It localises to the cytoplasm. The catalysed reaction is 3'-dephospho-CoA + ATP = ADP + CoA + H(+). Its pathway is cofactor biosynthesis; coenzyme A biosynthesis; CoA from (R)-pantothenate: step 5/5. In terms of biological role, catalyzes the phosphorylation of the 3'-hydroxyl group of dephosphocoenzyme A to form coenzyme A. The protein is Dephospho-CoA kinase of Blochmanniella pennsylvanica (strain BPEN).